Consider the following 86-residue polypeptide: Thioredoxin (86 aa).

Catalysis depends on nucleophile residues Cys-15 and Cys-18. Cysteines 15 and 18 form a disulfide.

It belongs to the glutaredoxin family.

In terms of biological role, does not function as a glutathione-disulfide oxidoreductase in the presence of glutathione and glutathione reductase. Has low thioredoxin activity in vitro. This is Thioredoxin from Methanocaldococcus jannaschii (strain ATCC 43067 / DSM 2661 / JAL-1 / JCM 10045 / NBRC 100440) (Methanococcus jannaschii).